Consider the following 267-residue polypeptide: tRNA pseudouridine synthase A (267 aa).

The Nucleophile role is filled by aspartate 53. Tyrosine 111 is a substrate binding site.

It belongs to the tRNA pseudouridine synthase TruA family. In terms of assembly, homodimer.

The catalysed reaction is uridine(38/39/40) in tRNA = pseudouridine(38/39/40) in tRNA. Functionally, formation of pseudouridine at positions 38, 39 and 40 in the anticodon stem and loop of transfer RNAs. This chain is tRNA pseudouridine synthase A, found in Alcanivorax borkumensis (strain ATCC 700651 / DSM 11573 / NCIMB 13689 / SK2).